The sequence spans 352 residues: Vacuolar protein sorting-associated protein 37C (352 aa).

Serine 29 carries the post-translational modification Phosphoserine. Positions 78–167 constitute a VPS37 C-terminal domain; that stretch reads VERCQEQKAK…RRPRALPELA (90 aa). Residues 162-352 form a disordered region; the sequence is ALPELAGDVP…HPPGPAWPRY (191 aa). Pro residues-rich tracts occupy residues 173–185, 202–213, and 319–336; these read KRPP…PQAT, YPLPYSPSPGLP, and PGQP…PPGT.

Belongs to the VPS37 family. As to quaternary structure, component of the ESCRT-I complex (endosomal sorting complex required for transport I) which consists of TSG101, VPS28, a VPS37 protein (VPS37A to -D) and MVB12A or MVB12B in a 1:1:1:1 stoichiometry. Interacts with TSG101, VPS28, MVB12A and MVB12B. Component of the ESCRT-I complex (endosomal sorting complex required for transport I) which consists of TSG101, VPS28, a VPS37 protein (VPS37A to -D) and UBAP1 in a 1:1:1:1 stoichiometry. Interacts with HGS and STAM2. Interacts with CEP55. In terms of processing, phosphorylated by TBK1.

It localises to the late endosome membrane. Functionally, component of the ESCRT-I complex, a regulator of vesicular trafficking process. Required for the sorting of endocytic ubiquitinated cargos into multivesicular bodies. May be involved in cell growth and differentiation. The polypeptide is Vacuolar protein sorting-associated protein 37C (Vps37c) (Mus musculus (Mouse)).